We begin with the raw amino-acid sequence, 166 residues long: Succinate dehydrogenase assembly factor 2, mitochondrial (166 aa).

A mitochondrion-targeting transit peptide spans 1-29 (MAVVAVFPALARMLAVSRRRLVSPSLSMT).

This sequence belongs to the SDHAF2 family. In terms of assembly, interacts with SDHA within the SDH catalytic dimer.

It is found in the mitochondrion matrix. Functionally, plays an essential role in the assembly of succinate dehydrogenase (SDH), an enzyme complex (also referred to as respiratory complex II) that is a component of both the tricarboxylic acid (TCA) cycle and the mitochondrial electron transport chain, and which couples the oxidation of succinate to fumarate with the reduction of ubiquinone (coenzyme Q) to ubiquinol. Required for flavinylation (covalent attachment of FAD) of the flavoprotein subunit SDHA of the SDH catalytic dimer. This Bos taurus (Bovine) protein is Succinate dehydrogenase assembly factor 2, mitochondrial.